The primary structure comprises 61 residues: DNA-directed RNA polymerase subunit 12-like protein (61 aa).

Zn(2+) is bound by residues Cys-21, Cys-24, Cys-38, and Cys-41.

This sequence belongs to the archaeal Rpo12/eukaryotic RPC10 RNA polymerase subunit family.

The protein localises to the nucleus. This Arabidopsis thaliana (Mouse-ear cress) protein is DNA-directed RNA polymerase subunit 12-like protein (NRPB12L).